The primary structure comprises 293 residues: N-acetylneuraminate lyase (293 aa).

The aceneuramate site is built by serine 47 and threonine 48. The active-site Proton donor is tyrosine 136. Lysine 164 serves as the catalytic Schiff-base intermediate with substrate. Aceneuramate contacts are provided by threonine 166, glycine 188, aspartate 190, glutamate 191, and serine 207.

The protein belongs to the DapA family. NanA subfamily. In terms of assembly, homotetramer.

The protein localises to the cytoplasm. The catalysed reaction is aceneuramate = aldehydo-N-acetyl-D-mannosamine + pyruvate. The protein operates within amino-sugar metabolism; N-acetylneuraminate degradation; D-fructose 6-phosphate from N-acetylneuraminate: step 1/5. Catalyzes the reversible aldol cleavage of N-acetylneuraminic acid (sialic acid; Neu5Ac) to form pyruvate and N-acetylmannosamine (ManNAc) via a Schiff base intermediate. The sequence is that of N-acetylneuraminate lyase from Haemophilus influenzae (strain ATCC 51907 / DSM 11121 / KW20 / Rd).